The primary structure comprises 185 residues: Probable nicotinate-nucleotide adenylyltransferase (185 aa).

Belongs to the NadD family.

The enzyme catalyses nicotinate beta-D-ribonucleotide + ATP + H(+) = deamido-NAD(+) + diphosphate. The protein operates within cofactor biosynthesis; NAD(+) biosynthesis; deamido-NAD(+) from nicotinate D-ribonucleotide: step 1/1. Functionally, catalyzes the reversible adenylation of nicotinate mononucleotide (NaMN) to nicotinic acid adenine dinucleotide (NaAD). This is Probable nicotinate-nucleotide adenylyltransferase from Methylorubrum extorquens (strain CM4 / NCIMB 13688) (Methylobacterium extorquens).